The chain runs to 149 residues: Large ribosomal subunit protein uL15 (149 aa).

The segment at 1 to 61 (MELNSLRPAL…GGQMPLQRRL (61 aa)) is disordered. Positions 30-39 (TATKGHKGQK) are enriched in basic residues.

Belongs to the universal ribosomal protein uL15 family. As to quaternary structure, part of the 50S ribosomal subunit.

Functionally, binds to the 23S rRNA. The protein is Large ribosomal subunit protein uL15 of Trichlorobacter lovleyi (strain ATCC BAA-1151 / DSM 17278 / SZ) (Geobacter lovleyi).